A 414-amino-acid chain; its full sequence is Histidinol dehydrogenase (414 aa).

Residues Tyr116, Gln177, and Asn200 each coordinate NAD(+). Substrate is bound by residues Thr223, Gln245, and His248. 2 residues coordinate Zn(2+): Gln245 and His248. Active-site proton acceptor residues include Glu313 and His314. Substrate is bound by residues His314, Asp347, Glu401, and His406. Asp347 is a Zn(2+) binding site. His406 contributes to the Zn(2+) binding site.

This sequence belongs to the histidinol dehydrogenase family. The cofactor is Zn(2+).

It carries out the reaction L-histidinol + 2 NAD(+) + H2O = L-histidine + 2 NADH + 3 H(+). Its pathway is amino-acid biosynthesis; L-histidine biosynthesis; L-histidine from 5-phospho-alpha-D-ribose 1-diphosphate: step 9/9. In terms of biological role, catalyzes the sequential NAD-dependent oxidations of L-histidinol to L-histidinaldehyde and then to L-histidine. This Staphylococcus epidermidis (strain ATCC 12228 / FDA PCI 1200) protein is Histidinol dehydrogenase.